We begin with the raw amino-acid sequence, 123 residues long: Large ribosomal subunit protein bL21 (123 aa).

This sequence belongs to the bacterial ribosomal protein bL21 family. Part of the 50S ribosomal subunit. Contacts protein L20.

Functionally, this protein binds to 23S rRNA in the presence of protein L20. This Rippkaea orientalis (strain PCC 8801 / RF-1) (Cyanothece sp. (strain PCC 8801)) protein is Large ribosomal subunit protein bL21.